Here is a 777-residue protein sequence, read N- to C-terminus: Zygote defective protein 12 (777 aa).

2 stretches are compositionally biased toward basic and acidic residues: residues methionine 1–glutamate 10 and lysine 18–glutamate 36. Positions methionine 1–glutamate 36 are disordered. The segment at methionine 1–glycine 234 is interaction with dli-1. The Calponin-homology (CH) domain occupies glutamine 44–alanine 169. Disordered stretches follow at residues glutamine 217–alanine 242 and serine 273–isoleucine 292. The span at serine 218–serine 235 shows a compositional bias: low complexity. Coiled coils occupy residues serine 236 to lysine 399 and asparagine 425 to arginine 688. Over residues serine 273–glycine 288 the composition is skewed to polar residues. The chain crosses the membrane as a helical span at residues alanine 747 to isoleucine 767. Residues alanine 749–alanine 777 are interaction with unc-84.

This sequence belongs to the hook family. In terms of assembly, homodimer. Interacts with the dynein subunit dli-1 via its N-terminus. May interact with microtubules. Interacts with sut-2. Interacts (via C-terminus) with unc-84 (via C-terminus); the interaction is direct. Expressed in the syncytial gonad, oocytes, and in all cells during the development of the early embryo.

It localises to the nucleus membrane. Its subcellular location is the cytoplasm. The protein localises to the cytoskeleton. It is found in the microtubule organizing center. The protein resides in the centrosome. Functionally, cytoskeletal linker protein, which is essential for attachment of the centrosome to the nucleus. Required for dynein localization to the nuclear envelope. Forms a LINC (LInker of Nucleoskeleton and Cytoskeleton) complex together with unc-84, that may be involved in DNA damage repair. This is Zygote defective protein 12 from Caenorhabditis elegans.